Here is a 4118-residue protein sequence, read N- to C-terminus: BEACH domain-containing protein lvsB (4118 aa).

The interval 1–35 is disordered; it reads MNRNFNNINNNNNNNNNYHGYQYHQQQQQQNQQQQ. The chain crosses the membrane as a helical span at residues 198-218; it reads GIPLSFLNFLITILLRILSLP. The span at 236–257 shows a compositional bias: low complexity; that stretch reads NFSGNNNNNFNNNNHYFNNNHN. 3 disordered regions span residues 236–267, 332–382, and 621–644; these read NFSG…QHHQ, PLSS…SKNN, and ISSS…KNNN. Residues 258-267 show a composition bias toward basic residues; the sequence is NHNHHYQHHQ. 2 stretches are compositionally biased toward low complexity: residues 332 to 381 and 621 to 636; these read PLSS…NSKN and ISSS…NSDG. Residues 827–847 form a helical membrane-spanning segment; it reads YLVLYMIVTEILSLLLELLVP. Low complexity predominate over residues 1155-1170; sequence NGGSISPSSIINNMNS. Disordered stretches follow at residues 1155 to 1213, 1599 to 1622, 1643 to 1681, 1928 to 1968, 2015 to 2044, 2537 to 2574, 2702 to 2741, 2754 to 2791, 2902 to 3007, 3245 to 3265, and 3348 to 3418; these read NGGS…FNNN, ANTT…TAVS, NSGI…STNL, GNFL…ISSS, STNN…SNSL, RRGS…NNNE, FSPS…TSDS, DQSN…NGIN, NTNS…NSNE, PLIP…TKDQ, and KTTA…NIVK. Composition is skewed to low complexity over residues 1657-1678 and 1935-1968; these read SIGS…SGSS and SSSN…ISSS. Residues 2540–2571 are compositionally biased toward low complexity; the sequence is SSSSSTNSTTNNNNNNSSTTTTSNNNNNNNEN. Positions 2705–2738 form a coiled coil; the sequence is SRSKEKEKEKEKEKEKEKEKEKERERERETTNVT. A compositionally biased stretch (basic and acidic residues) spans 2706 to 2734; that stretch reads RSKEKEKEKEKEKEKEKEKEKERERERET. 2 stretches are compositionally biased toward low complexity: residues 2758-2791 and 2902-2947; these read EESS…NGIN and NTNS…NSTN. A compositionally biased stretch (polar residues) spans 2948 to 2962; it reads QTITDTTLSPASSNV. Composition is skewed to low complexity over residues 2963-2980 and 2988-3006; these read SISN…NNNS and SNIN…SNSN. The BEACH-type PH domain maps to 3303–3479; sequence KLGEKVNEVF…DRDIVYDLIM (177 aa). Residues 3357–3411 show a composition bias toward low complexity; sequence SNNNNNNNNNNNNNNNNNNNNSNDTTSSINSTTATNTNTTNTTTTNTTTTTTTTN. One can recognise a BEACH domain in the interval 3491–3782; it reads AEVHGNILKM…QIFTKPHPKK (292 aa). WD repeat units lie at residues 3868–3907, 3924–3963, 3984–4027, 4029–4073, and 4075–4114; these read VLND…GTIM, GHTN…YINS, TFET…LAKQ, FVND…KIRT, and VSKS…GYSS.

The protein resides in the membrane. It localises to the lysosome. Its subcellular location is the endosome. Functionally, involved in negative regulation of lysosome biogenesis, by limiting the heterotypic fusion of early endosomes and postlysosomal compartments. This is BEACH domain-containing protein lvsB (lvsB) from Dictyostelium discoideum (Social amoeba).